A 451-amino-acid chain; its full sequence is Interferon-related developmental regulator 1 (451 aa).

Over residues 1 to 10 (MPKNKKRNTP) the composition is skewed to basic residues. A disordered region spans residues 1 to 69 (MPKNKKRNTP…PSSFAEDGPE (69 aa)). Low complexity predominate over residues 23-33 (AAAATAATAGG). A compositionally biased stretch (polar residues) spans 49–61 (ETMSHCSGYSDPS).

This sequence belongs to the IFRD family. Interacts with PSIP1/LEDGF. As to expression, expressed in a variety of tissues.

Functionally, could play a role in regulating gene activity in the proliferative and/or differentiative pathways induced by NGF. May be an autocrine factor that attenuates or amplifies the initial ligand-induced signal. The sequence is that of Interferon-related developmental regulator 1 (IFRD1) from Homo sapiens (Human).